We begin with the raw amino-acid sequence, 689 residues long: Glycine--tRNA ligase beta subunit (689 aa).

The protein belongs to the class-II aminoacyl-tRNA synthetase family. In terms of assembly, tetramer of two alpha and two beta subunits.

It is found in the cytoplasm. The enzyme catalyses tRNA(Gly) + glycine + ATP = glycyl-tRNA(Gly) + AMP + diphosphate. This Photobacterium profundum (strain SS9) protein is Glycine--tRNA ligase beta subunit.